We begin with the raw amino-acid sequence, 559 residues long: MSLEVVRAAAGMVLAELYVSDREGNDVTGDGTKEKPFKTGLKALMTVGKEPFPTIYVDSQKENERWDVISKSQMKNIRKLWHREQMKSESREKKEAEDNLRREKNLEEAKKITIKNDPSLPEPKCVKIRELKGYRGQRIKVFGWVHRLRRQGKNLMFLVLRDGTGFLQCVLSDDLCQCYNGVVLSTESSVAVYGVLNLTPKGKQAPGGHELSCDFWELIGLAPAGGADNLINEESDVDVQLNNRHMMIRGENMSKILKARSVITRCFRDHFFDRGYHEITPPTLVQTQVEGGATLFKLDYFGEEAYLTQSSQLYLETCIPALGDVFCIAQSYRAEQSRTRRHLAEYTHVEAECPFLTFEELLNRLEDLVCDVVDRVLKSPAGNIVRDLNPNFKPPKRPFKRMNYSDAIVWLKEHNIKKEDGTFYEFGEDIPEAPERLMTDTINEPILLCRFPVEIKSFYMQRCPEDPRLTESVDVLMPNVGEIVGGSMRIWDNEEILAGYKREGIDPTPYYWYTDQRKYGTCPHGGYGLGLERFLTWILDRYHIRDVCLYPRFVQRCKP.

Position 72 is a phosphoserine (Ser-72). 2 positions are modified to N6-acetyllysine: Lys-255 and Lys-501.

The protein belongs to the class-II aminoacyl-tRNA synthetase family.

Its subcellular location is the cytoplasm. It catalyses the reaction tRNA(Asn) + L-asparagine + ATP = L-asparaginyl-tRNA(Asn) + AMP + diphosphate + H(+). This is Asparagine--tRNA ligase, cytoplasmic (NARS) from Bos taurus (Bovine).